Here is an 884-residue protein sequence, read N- to C-terminus: Alanine--tRNA ligase (884 aa).

4 residues coordinate Zn(2+): His570, His574, Cys676, and His680.

Belongs to the class-II aminoacyl-tRNA synthetase family. Zn(2+) serves as cofactor.

Its subcellular location is the cytoplasm. The enzyme catalyses tRNA(Ala) + L-alanine + ATP = L-alanyl-tRNA(Ala) + AMP + diphosphate. Functionally, catalyzes the attachment of alanine to tRNA(Ala) in a two-step reaction: alanine is first activated by ATP to form Ala-AMP and then transferred to the acceptor end of tRNA(Ala). Also edits incorrectly charged Ser-tRNA(Ala) and Gly-tRNA(Ala) via its editing domain. In Lawsonia intracellularis (strain PHE/MN1-00), this protein is Alanine--tRNA ligase.